The following is a 782-amino-acid chain: MSASGKKPGTKGTKRHRKITSCRECHRLKLKCDRVWPCENCKKRGIPNLCPNGILVSVSDKLIKLLLSRIDTLQNCVKSVSPNHESLIVSSDDQKIIDDIYEKFGEKPAEDTKDENRSQPIHDPDHPTLEDVAQMLGKLKVGSHGYFNYYGASSSRSCIPQQDPNSEEEDTFMQRPFLYPASSYNSALHWSHRIPNILNPSTLCDMLPVPQFAVRLMGLYFDNVGWSSHIIHRPSFEEACLNLYSAAPDRTNPQPQFLSLTYMVFCLGTLFTSPVLVRNRYSLAHEFFLRAQLCFDISVSGFTPSLDSVVAVMLMAQYSYFCDRLERTNFAWNCIGLAIRLAVAMGLHRDGEVFELSAFQLHMRRLIWSELLFFDRMLSMSLGRPFAISNDQTNVHEPSNVCDIQISSQSNCIPDPSYERTEASFTIFKAKLSKVIASVLDRAFRFTPPSYSEVEALTEQFKVLENELPDYMRISRDTPNLPPMVIIEQYSAKFLIQQALLYLHRPWFVRAATRKEEREHYKSSFNLCTSVSHELIHNLYSLMCLVPVEPLRWWVFRFHSLNAGIIQAAYALCFPNTDYALTAYNDLQYICRIFEHLKGGFMFSNKDYDFLIQLKSKVFNRFQLSSQGLTPEDLTEDVPFLHFNVPSSRPNSKSPDDSSMRAEKAAQLDGLGLSSDDLNTAQSENLPIYEQENPLLFDSLSWHVPKDDTRNDKSPLVPTWNADMMFEEEQKPIVPIDLSSMQDDQVSSLTTNEEFDPLSSFQASHSGSNFWTNMMNEMGIPK.

The zn(2)-C6 fungal-type DNA-binding region spans 22-50 (CRECHRLKLKCDRVWPCENCKKRGIPNLC). Disordered regions lie at residues 105–126 (GEKPAEDTKDENRSQPIHDPDH) and 645–665 (VPSSRPNSKSPDDSSMRAEKA). The span at 654–665 (SPDDSSMRAEKA) shows a compositional bias: basic and acidic residues.

The protein resides in the nucleus. This is an uncharacterized protein from Schizosaccharomyces pombe (strain 972 / ATCC 24843) (Fission yeast).